A 247-amino-acid chain; its full sequence is Protein NipSnap homolog 3A (247 aa).

Residues Lys48 and Lys166 each carry the N6-acetyllysine modification.

It belongs to the NipSnap family.

The protein localises to the cytoplasm. The protein resides in the cytosol. The protein is Protein NipSnap homolog 3A (NIPSNAP3A) of Pongo abelii (Sumatran orangutan).